The following is a 130-amino-acid chain: Small ribosomal subunit protein uS9 (130 aa).

It belongs to the universal ribosomal protein uS9 family.

The polypeptide is Small ribosomal subunit protein uS9 (rpsI) (Geobacillus stearothermophilus (Bacillus stearothermophilus)).